We begin with the raw amino-acid sequence, 497 residues long: MNIKITSGHLKNARVRAVISFSFKEDRKLSPEIEDLDRILDGAISQLKREQKFDGSDGKILVVPTFGKGKMDYVILIGAGSRRKADLDKVRRLGNISVKTTKKLKIDRFLIDAEPLSVIKEGEDSIAQAVVEGVILGNYRFDKYLSKKDEYRIKELQIRVKRRFKNKAEQSVKVGKILAESQNFTRDIVNEPGNVITPEKLAQIAQDLAREYGFEVKIYDEEEIEKMGMNAYLAVAKGSANPPRFIHIIYRPEKPKKKIALIGKGLTFDSGGLNIKPGDYMRWMKADKSGACAVLGIFKAIGQLKPDVEVHGIIAAAENMPDGRSYRPDDIIKAKNGVTIEIGNTDAEGRLTLADALCYASELKPDAIIDMATLTGACVVALGEYTAGVMGNDERLIDQILDISKRTGEWMWPLPFNDMLREHIKAPHADVYNIGTTRYGGAITAGLFLEKFVDKKIPWVHIDIAGPAHNTKGWYYHPKGATGFPVRTITTFLLNQE.

Mn(2+) is bound by residues Lys264 and Asp269. The active site involves Lys276. The Mn(2+) site is built by Asp287, Asp346, and Glu348. The active site involves Arg350.

Belongs to the peptidase M17 family. The cofactor is Mn(2+).

The protein resides in the cytoplasm. The catalysed reaction is Release of an N-terminal amino acid, Xaa-|-Yaa-, in which Xaa is preferably Leu, but may be other amino acids including Pro although not Arg or Lys, and Yaa may be Pro. Amino acid amides and methyl esters are also readily hydrolyzed, but rates on arylamides are exceedingly low.. It catalyses the reaction Release of an N-terminal amino acid, preferentially leucine, but not glutamic or aspartic acids.. Its function is as follows. Presumably involved in the processing and regular turnover of intracellular proteins. Catalyzes the removal of unsubstituted N-terminal amino acids from various peptides. In Persephonella marina (strain DSM 14350 / EX-H1), this protein is Probable cytosol aminopeptidase.